We begin with the raw amino-acid sequence, 515 residues long: Protein DETOXIFICATION 42 (515 aa).

The Cytoplasmic portion of the chain corresponds to Met1–Glu35. Residues Ile36–Val56 traverse the membrane as a helical segment. The Extracellular portion of the chain corresponds to Asp57–Thr58. A helical membrane pass occupies residues Ala59–Phe79. Topologically, residues Asn80–Ser168 are cytoplasmic. The helical transmembrane segment at Ser169 to Ala189 threads the bilayer. Residues Lys190–Tyr211 lie on the Extracellular side of the membrane. Residues Leu212 to Phe232 form a helical membrane-spanning segment. The Cytoplasmic portion of the chain corresponds to Arg233–Leu242. A helical membrane pass occupies residues Phe243–Phe263. The Extracellular portion of the chain corresponds to Arg264 to Gly266. A helical membrane pass occupies residues Val267–Trp287. At Lys288–Gly312 the chain is on the cytoplasmic side. Residues Phe313–Ala333 traverse the membrane as a helical segment. At Ala334 to Gln349 the chain is on the extracellular side. A helical membrane pass occupies residues Val350 to Ala370. At Ser371–Gln390 the chain is on the cytoplasmic side. A helical transmembrane segment spans residues Leu391–Ala411. The Extracellular portion of the chain corresponds to Arg412–Leu423. A helical membrane pass occupies residues Ile424 to Phe444. Residues Asp445–Asp453 lie on the Cytoplasmic side of the membrane. The helical transmembrane segment at Phe454–Phe474 threads the bilayer. The Extracellular portion of the chain corresponds to Leu475 to Gly480. The chain crosses the membrane as a helical span at residues Phe481–Trp501. At Arg502 to Ser515 the chain is on the cytoplasmic side.

This sequence belongs to the multi antimicrobial extrusion (MATE) (TC 2.A.66.1) family. Expressed in roots, but not in shoots. Detected in the mature regions of the root, extending from above the root-hair region to the root-shoot junction.

The protein localises to the cell membrane. In terms of biological role, citrate transporter critical for aluminum tolerance. Responsible for citrate exudation into the rhizosphere to protect roots from aluminum toxicity. This chain is Protein DETOXIFICATION 42, found in Arabidopsis thaliana (Mouse-ear cress).